We begin with the raw amino-acid sequence, 36 residues long: Glucagon-1 (36 aa).

It belongs to the glucagon family.

Its subcellular location is the secreted. Functionally, promotes hydrolysis of glycogen and lipids, and raises the blood sugar level. The polypeptide is Glucagon-1 (gcg1) (Oreochromis niloticus (Nile tilapia)).